Consider the following 82-residue polypeptide: Small ribosomal subunit protein uS17 (82 aa).

It belongs to the universal ribosomal protein uS17 family. Part of the 30S ribosomal subunit.

Functionally, one of the primary rRNA binding proteins, it binds specifically to the 5'-end of 16S ribosomal RNA. This chain is Small ribosomal subunit protein uS17, found in Azorhizobium caulinodans (strain ATCC 43989 / DSM 5975 / JCM 20966 / LMG 6465 / NBRC 14845 / NCIMB 13405 / ORS 571).